Reading from the N-terminus, the 860-residue chain is Rod cGMP-specific 3',5'-cyclic phosphodiesterase subunit alpha (860 aa).

The residue at position 2 (G2) is an N-acetylglycine. 2 GAF domains span residues 73 to 222 (QTEK…NLIM) and 254 to 431 (DIER…GWSV). The PDEase domain maps to 483 to 816 (EEEELAEILQ…KEWKALADEY (334 aa)). H559 functions as the Proton donor in the catalytic mechanism. 4 residues coordinate a divalent metal cation: H563, H599, D600, and D720. The tract at residues 821–860 (KVQEEKKQKQQSAKSAAAGNQPGGNPSPGGATTSKSCCIQ) is disordered. A compositionally biased stretch (low complexity) spans 830–851 (QQSAKSAAAGNQPGGNPSPGGA). Residue C857 is modified to Cysteine methyl ester. C857 is lipidated: S-farnesyl cysteine. Residues 858–860 (CIQ) constitute a propeptide, removed in mature form.

This sequence belongs to the cyclic nucleotide phosphodiesterase family. Oligomer composed of two catalytic chains (alpha and beta), an inhibitory chain (gamma) and the delta chain. A divalent metal cation is required as a cofactor.

It is found in the cell membrane. It localises to the cell projection. The protein resides in the cilium. The protein localises to the photoreceptor outer segment. The enzyme catalyses 3',5'-cyclic GMP + H2O = GMP + H(+). Its function is as follows. Rod-specific cGMP phosphodiesterase that catalyzes the hydrolysis of 3',5'-cyclic GMP. This protein participates in processes of transmission and amplification of the visual signal. This Homo sapiens (Human) protein is Rod cGMP-specific 3',5'-cyclic phosphodiesterase subunit alpha.